The chain runs to 272 residues: Indole-3-glycerol phosphate synthase (272 aa).

The protein belongs to the TrpC family.

It carries out the reaction 1-(2-carboxyphenylamino)-1-deoxy-D-ribulose 5-phosphate + H(+) = (1S,2R)-1-C-(indol-3-yl)glycerol 3-phosphate + CO2 + H2O. It participates in amino-acid biosynthesis; L-tryptophan biosynthesis; L-tryptophan from chorismate: step 4/5. This is Indole-3-glycerol phosphate synthase from Mycolicibacterium gilvum (strain PYR-GCK) (Mycobacterium gilvum (strain PYR-GCK)).